Consider the following 397-residue polypeptide: uncharacterized protein (397 aa).

Transmembrane regions (helical) follow at residues 5 to 25 (LKIL…LWPL), 43 to 63 (LVLM…GFLF), 69 to 89 (FKSI…LVFF), 92 to 112 (WPAY…VFPA), 131 to 151 (AIYV…GVVA), 157 to 177 (YVFL…YFGF), 202 to 222 (FAAL…YSQW), 233 to 253 (IGIS…LIVL), 269 to 289 (LKAQ…MLLT), 293 to 313 (FPMF…VWPA), 333 to 353 (FVNS…GVLV), and 360 to 380 (ALVL…LLYD).

It belongs to the major facilitator superfamily.

It localises to the cell membrane. This is an uncharacterized protein from Bacillus subtilis (strain 168).